Here is a 203-residue protein sequence, read N- to C-terminus: Glycerol-3-phosphate acyltransferase (203 aa).

4 helical membrane passes run 4–24, 68–88, 104–124, and 125–145; these read LTFA…AVLI, IPVY…FIGI, GGKG…DMGS, and FMIV…LAAI.

It belongs to the PlsY family. Probably interacts with PlsX.

The protein resides in the cell inner membrane. It carries out the reaction an acyl phosphate + sn-glycerol 3-phosphate = a 1-acyl-sn-glycero-3-phosphate + phosphate. Its pathway is lipid metabolism; phospholipid metabolism. Its function is as follows. Catalyzes the transfer of an acyl group from acyl-phosphate (acyl-PO(4)) to glycerol-3-phosphate (G3P) to form lysophosphatidic acid (LPA). This enzyme utilizes acyl-phosphate as fatty acyl donor, but not acyl-CoA or acyl-ACP. The sequence is that of Glycerol-3-phosphate acyltransferase from Tolumonas auensis (strain DSM 9187 / NBRC 110442 / TA 4).